A 287-amino-acid polypeptide reads, in one-letter code: Beta-lactamase GES-1 (287 aa).

An N-terminal signal peptide occupies residues 1–18 (MRFIHALLLAGIAHSAYA). Cysteine 63 and cysteine 233 are joined by a disulfide. The Nucleophile; acyl-ester intermediate role is filled by serine 64. 4 residues coordinate a beta-lactam: lysine 67, serine 125, glutamate 161, and threonine 232.

The protein belongs to the class-A beta-lactamase family. As to quaternary structure, monomer. May form dimers.

It carries out the reaction a beta-lactam + H2O = a substituted beta-amino acid. Inhibited by the beta-lactamase-blocking agents clavulanic acid, tazobactam, sulbactam and tazobactam and the carbapenem, imipenem. Inhibition by imipenem may involve Gly-165. Extended-spectrum beta-lactamase (ESBL) which confers resistance to penicillins, as well as first, second, third and fourth-generation cephalosporins. Has ceftazidime-hydrolyzing activity. Inactive against the carbapenems, imipenem, meropenem, ertapenem and doripenem. However, weak hydrolytic activity with respect to imipenem has also been reported. The sequence is that of Beta-lactamase GES-1 from Klebsiella pneumoniae.